The chain runs to 215 residues: ATP phosphoribosyltransferase (215 aa).

It belongs to the ATP phosphoribosyltransferase family. Short subfamily. As to quaternary structure, heteromultimer composed of HisG and HisZ subunits.

It localises to the cytoplasm. It catalyses the reaction 1-(5-phospho-beta-D-ribosyl)-ATP + diphosphate = 5-phospho-alpha-D-ribose 1-diphosphate + ATP. It participates in amino-acid biosynthesis; L-histidine biosynthesis; L-histidine from 5-phospho-alpha-D-ribose 1-diphosphate: step 1/9. In terms of biological role, catalyzes the condensation of ATP and 5-phosphoribose 1-diphosphate to form N'-(5'-phosphoribosyl)-ATP (PR-ATP). Has a crucial role in the pathway because the rate of histidine biosynthesis seems to be controlled primarily by regulation of HisG enzymatic activity. This chain is ATP phosphoribosyltransferase, found in Cyanothece sp. (strain PCC 7425 / ATCC 29141).